The primary structure comprises 285 residues: Bifunctional protein FolD (285 aa).

Residues 163–165 (GRS) and Ser-188 each bind NADP(+).

Belongs to the tetrahydrofolate dehydrogenase/cyclohydrolase family. As to quaternary structure, homodimer.

The enzyme catalyses (6R)-5,10-methylene-5,6,7,8-tetrahydrofolate + NADP(+) = (6R)-5,10-methenyltetrahydrofolate + NADPH. The catalysed reaction is (6R)-5,10-methenyltetrahydrofolate + H2O = (6R)-10-formyltetrahydrofolate + H(+). The protein operates within one-carbon metabolism; tetrahydrofolate interconversion. Its function is as follows. Catalyzes the oxidation of 5,10-methylenetetrahydrofolate to 5,10-methenyltetrahydrofolate and then the hydrolysis of 5,10-methenyltetrahydrofolate to 10-formyltetrahydrofolate. In Lactococcus lactis subsp. cremoris (strain MG1363), this protein is Bifunctional protein FolD.